Here is a 406-residue protein sequence, read N- to C-terminus: Endoplasmic reticulum resident protein 44 (406 aa).

An N-terminal signal peptide occupies residues 1-29; sequence MHPAVFLSLPDLRCSLLLLVTWVFTPVTT. A Thioredoxin domain is found at 30 to 138; it reads EITSLDTENI…VKALADYIRQ (109 aa). Intrachain disulfides connect cysteine 189–cysteine 241 and cysteine 301–cysteine 318. Positions 236–285 are interaction with ITPR1; sequence WIQDKCVPLVREITFENGEELTEEGLPFLILFHMKEDTESLEIFQNEVAR. The segment at 360 to 387 is disordered; sequence FHHGPDPTDTAPGEQAQDVASSPPESSF. Positions 377–387 are enriched in polar residues; the sequence is DVASSPPESSF. Positions 403 to 406 match the Prevents secretion from ER motif; that stretch reads RDEL.

As to quaternary structure, forms mixed disulfides with both ERO1A and ERO1B and cargo folding intermediates; the interactions with ERO1A and ERO1B result in their retention in the endoplasmic reticulum. Directly interacts with ITPR1 in a pH-, redox state- and calcium-dependent manner, but not with ITPR2 or ITPR3. The strength of this interaction inversely correlates with calcium concentration.

The protein resides in the endoplasmic reticulum lumen. In terms of biological role, mediates thiol-dependent retention in the early secretory pathway, forming mixed disulfides with substrate proteins through its conserved CRFS motif. Inhibits the calcium channel activity of ITPR1. May have a role in the control of oxidative protein folding in the endoplasmic reticulum. Required to retain ERO1A and ERO1B in the endoplasmic reticulum. In Homo sapiens (Human), this protein is Endoplasmic reticulum resident protein 44 (ERP44).